The primary structure comprises 422 residues: 5-hydroxytryptamine receptor 1A (422 aa).

Residues 1–38 are Extracellular-facing; sequence MDVLGPGQGNNTTSSEGPFGTRANATGISDVTFSYQVI. 3 N-linked (GlcNAc...) asparagine glycosylation sites follow: asparagine 10, asparagine 11, and asparagine 24. The helical transmembrane segment at 39–59 threads the bilayer; sequence TSLLLGTLIFCAVLGNACVVA. Over 60-73 the chain is Cytoplasmic; the sequence is AIALERSLQNVANY. The chain crosses the membrane as a helical span at residues 74–98; sequence LIGSLAVTDLMVSVLVLPMAALYQV. Residues 99 to 107 are Extracellular-facing; the sequence is LNKWTLGQV. Residues 108–132 traverse the membrane as a helical segment; it reads TCDLFIALDVLCCTSSILHLCAIAL. Cysteine 109 and cysteine 187 are joined by a disulfide. Residues aspartate 116 and cysteine 120 each coordinate serotonin. The short motif at 133–135 is the DRY motif; important for ligand-induced conformation changes element; it reads DRY. Residues 133 to 152 are Cytoplasmic-facing; that stretch reads DRYWAITDPIDYVNKRTPRR. Residues 153-174 traverse the membrane as a helical segment; sequence AAALISLTWLVGFLISIPPMLG. Residues 175 to 193 lie on the Extracellular side of the membrane; that stretch reads WRTPEDRSDPDACTISKDH. Residues 194 to 216 traverse the membrane as a helical segment; it reads GYTIYSTFGAFYIPLLLMLVLYG. Over 217–346 the chain is Cytoplasmic; that stretch reads RIFRAARFRI…LARERKTVKT (130 aa). The tract at residues 237–262 is disordered; sequence GADSRLGASPAPQRKKSANGELGSRE. 1D-myo-inositol 4-phosphate contacts are provided by lysine 345, threonine 346, and glycine 352. A helical transmembrane segment spans residues 347–370; the sequence is LGIIMGTFILCWLPFFIVALVLPF. The Extracellular portion of the chain corresponds to 371–378; it reads CESSCHMP. The helical transmembrane segment at 379–403 threads the bilayer; that stretch reads TLLGAIINWLGYSNSLLNPVIYAYF. Positions 396–400 match the NPxxY motif; important for ligand-induced conformation changes and signaling motif; that stretch reads NPVIY. 1D-myo-inositol 4-phosphate is bound by residues phenylalanine 403, asparagine 404, and lysine 405. Residues 404-422 are Cytoplasmic-facing; that stretch reads NKDFQNAFKKILKCKFCRR.

Belongs to the G-protein coupled receptor 1 family. 5-hydroxytryptamine receptor subfamily. HTR1A sub-subfamily. As to quaternary structure, heterodimer; heterodimerizes with GPER1. Interacts with YIF1B. Interacts with GPR39 and GALR1.

The protein localises to the cell membrane. Its subcellular location is the cell projection. It localises to the dendrite. Its activity is regulated as follows. G-protein coupled receptor activity is regulated by lipids: phosphatidylinositol 4-phosphate increases HTR1A-mediated activity. Its function is as follows. G-protein coupled receptor for 5-hydroxytryptamine (serotonin). Also functions as a receptor for various drugs and psychoactive substances. Ligand binding causes a conformation change that triggers signaling via guanine nucleotide-binding proteins (G proteins) and modulates the activity of downstream effectors, such as adenylate cyclase. HTR1A is coupled to G(i)/G(o) G alpha proteins and mediates inhibitory neurotransmission: signaling inhibits adenylate cyclase activity and activates a phosphatidylinositol-calcium second messenger system that regulates the release of Ca(2+) ions from intracellular stores. Beta-arrestin family members regulate signaling by mediating both receptor desensitization and resensitization processes. The polypeptide is 5-hydroxytryptamine receptor 1A (HTR1A) (Equus caballus (Horse)).